Reading from the N-terminus, the 128-residue chain is Glycine cleavage system H protein (128 aa).

The Lipoyl-binding domain maps to 25–107 (TITVGITHHA…YGAGWFFKLK (83 aa)). Lys-66 is subject to N6-lipoyllysine.

It belongs to the GcvH family. In terms of assembly, the glycine cleavage system is composed of four proteins: P, T, L and H. (R)-lipoate serves as cofactor.

The glycine cleavage system catalyzes the degradation of glycine. The H protein shuttles the methylamine group of glycine from the P protein to the T protein. This is Glycine cleavage system H protein from Neisseria meningitidis serogroup B (strain ATCC BAA-335 / MC58).